The sequence spans 273 residues: Beta-lactamase OXA-23 (273 aa).

A signal peptide spans 1 to 17; it reads MNKYFTCYVVASLFLSG. Serine 79 serves as the catalytic Acyl-ester intermediate. The a beta-lactam site is built by serine 79, lysine 82, serine 126, threonine 217, tryptophan 219, and arginine 259. An N6-carboxylysine modification is found at lysine 82.

It belongs to the class-D beta-lactamase family. In terms of assembly, monomer. Post-translationally, carboxylated on the epsilon-amino group of a lysine, with the resulting carbamate functional group serving as a general base. Probably N-carboxylated at Lys-82 at neutral pH in vivo and undergoes complete N-decarboxylation, at pH 4.1, in vitro.

The protein localises to the periplasm. The enzyme catalyses a beta-lactam + H2O = a substituted beta-amino acid. With respect to regulation, inhibited by the desmethyl carbapenem, MA-1-206, via a covalent binding to Ser-79. In terms of biological role, class D beta-lactamase which confers resistance to the beta-lactam antibiotics, including ampicillin, and carbapenems such as imipenem and meropenem. Acts via hydrolysis of the beta-lactam ring. Has penicillin-, cephalosporin- and carbapenem-hydrolyzing activities, but lacks ceftazidime-hydrolyzing activity. In Acinetobacter baumannii, this protein is Beta-lactamase OXA-23.